The primary structure comprises 346 residues: Phenylalanine--tRNA ligase alpha subunit (346 aa).

Position 260 (Glu-260) interacts with Mg(2+).

It belongs to the class-II aminoacyl-tRNA synthetase family. Phe-tRNA synthetase alpha subunit type 1 subfamily. Tetramer of two alpha and two beta subunits. Mg(2+) is required as a cofactor.

It is found in the cytoplasm. The enzyme catalyses tRNA(Phe) + L-phenylalanine + ATP = L-phenylalanyl-tRNA(Phe) + AMP + diphosphate + H(+). The sequence is that of Phenylalanine--tRNA ligase alpha subunit from Herpetosiphon aurantiacus (strain ATCC 23779 / DSM 785 / 114-95).